Consider the following 378-residue polypeptide: Aminomethyltransferase (378 aa).

This sequence belongs to the GcvT family. In terms of assembly, the glycine cleavage system is composed of four proteins: P, T, L and H.

It carries out the reaction N(6)-[(R)-S(8)-aminomethyldihydrolipoyl]-L-lysyl-[protein] + (6S)-5,6,7,8-tetrahydrofolate = N(6)-[(R)-dihydrolipoyl]-L-lysyl-[protein] + (6R)-5,10-methylene-5,6,7,8-tetrahydrofolate + NH4(+). In terms of biological role, the glycine cleavage system catalyzes the degradation of glycine. The protein is Aminomethyltransferase of Acidobacterium capsulatum (strain ATCC 51196 / DSM 11244 / BCRC 80197 / JCM 7670 / NBRC 15755 / NCIMB 13165 / 161).